An 877-amino-acid polypeptide reads, in one-letter code: Phosphoenolpyruvate carboxylase (877 aa).

Active-site residues include histidine 137 and lysine 542.

It belongs to the PEPCase type 1 family. The cofactor is Mg(2+).

The enzyme catalyses oxaloacetate + phosphate = phosphoenolpyruvate + hydrogencarbonate. Its function is as follows. Forms oxaloacetate, a four-carbon dicarboxylic acid source for the tricarboxylic acid cycle. This Tolumonas auensis (strain DSM 9187 / NBRC 110442 / TA 4) protein is Phosphoenolpyruvate carboxylase.